Here is a 275-residue protein sequence, read N- to C-terminus: Large ribosomal subunit protein uL2 (275 aa).

Disordered regions lie at residues 36–55 (KQSKNAGRNNSGRITVRHQG) and 223–275 (VAMN…RHKR). The span at 39–48 (KNAGRNNSGR) shows a compositional bias: polar residues. Basic and acidic residues predominate over residues 229–239 (DHPHGGGEGRT).

This sequence belongs to the universal ribosomal protein uL2 family. As to quaternary structure, part of the 50S ribosomal subunit. Forms a bridge to the 30S subunit in the 70S ribosome.

One of the primary rRNA binding proteins. Required for association of the 30S and 50S subunits to form the 70S ribosome, for tRNA binding and peptide bond formation. It has been suggested to have peptidyltransferase activity; this is somewhat controversial. Makes several contacts with the 16S rRNA in the 70S ribosome. The sequence is that of Large ribosomal subunit protein uL2 from Aromatoleum aromaticum (strain DSM 19018 / LMG 30748 / EbN1) (Azoarcus sp. (strain EbN1)).